Consider the following 779-residue polypeptide: Acyl-homoserine lactone acylase PvdQ (779 aa).

Residues 1–25 form the signal peptide; sequence MIISRPLCSFVFAGLSFAVILPAQA. Residues 202-223 constitute a propeptide, spacer peptide; the sequence is AQQAQALQLAAARNQRFALERG. Serine 224 functions as the Nucleophile in the catalytic mechanism. Positions 731–746 are enriched in polar residues; that stretch reads ESSNPQSAHSSDQTEA. The interval 731–750 is disordered; the sequence is ESSNPQSAHSSDQTEAFSKK.

Belongs to the peptidase S45 family. Heterodimer of an alpha subunit and a beta subunit processed from the same precursor.

The protein localises to the periplasm. The enzyme catalyses an N-acyl-L-homoserine lactone + H2O = L-homoserine lactone + a carboxylate. In terms of biological role, catalyzes the deacylation of acyl-homoserine lactone (AHL or acyl-HSL), releasing homoserine lactone (HSL) and the corresponding fatty acid. Possesses a specificity for the degradation of long-chain acyl-HSLs (side chains of 11 to 14 carbons in length). This is Acyl-homoserine lactone acylase PvdQ (pvdQ) from Pseudomonas syringae pv. syringae (strain B728a).